The primary structure comprises 346 residues: UPF0718 protein YraQ (346 aa).

The next 9 helical transmembrane spans lie at 12–32, 71–91, 113–133, 146–166, 167–187, 223–243, 260–280, 296–316, and 326–346; these read PIQW…LWYV, MIYF…GSLI, LLGT…APVA, ALAF…FMGF, VLGW…VLLI, ALWT…LVLG, SLMW…PTAA, APAL…LIML, and WLTG…ALLF.

The protein belongs to the UPF0718 family.

Its subcellular location is the cell membrane. The protein is UPF0718 protein YraQ (yraQ) of Escherichia coli (strain K12).